Reading from the N-terminus, the 311-residue chain is Urease accessory protein UreD (311 aa).

The protein belongs to the UreD family. UreD, UreF and UreG form a complex that acts as a GTP-hydrolysis-dependent molecular chaperone, activating the urease apoprotein by helping to assemble the nickel containing metallocenter of UreC. The UreE protein probably delivers the nickel.

Its subcellular location is the cytoplasm. Functionally, required for maturation of urease via the functional incorporation of the urease nickel metallocenter. The sequence is that of Urease accessory protein UreD from Synechococcus sp. (strain CC9605).